The primary structure comprises 338 residues: UbiA prenyltransferase domain-containing protein 1 (338 aa).

Positions 1 to 39 are disordered; the sequence is MAAVQAPGEKINIQAGETTQVGDTDQQRNDWPEEDRLPE. The residue at position 2 (Ala2) is an N-acetylalanine. Positions 15–24 are enriched in polar residues; it reads AGETTQVGDT. A compositionally biased stretch (basic and acidic residues) spans 25–39; it reads DQQRNDWPEEDRLPE. A run of 8 helical transmembrane segments spans residues 83-103, 134-154, 160-180, 188-208, 209-229, 245-267, 277-297, and 315-335; these read LLLG…LVNT, FGVF…YLST, LALI…GIGF, LVIL…VQVG, SLAI…EAIL, IVTL…LLFL, THCS…FSLE, and LNLL…AGSL.

Belongs to the UbiA prenyltransferase family. In terms of assembly, interacts with HMGCR and SOAT1.

It is found in the endoplasmic reticulum membrane. The protein resides in the golgi apparatus membrane. Its subcellular location is the mitochondrion membrane. The catalysed reaction is menadiol + (2E,6E,10E)-geranylgeranyl diphosphate = menaquinol-4 + diphosphate. The enzyme catalyses all-trans-decaprenyl diphosphate + 4-hydroxybenzoate = 4-hydroxy-3-(all-trans-decaprenyl)benzoate + diphosphate. It participates in quinol/quinone metabolism; menaquinone biosynthesis. Its pathway is cofactor biosynthesis; ubiquinone biosynthesis. Functionally, prenyltransferase that mediates the formation of menaquinone-4 (MK-4) and coenzyme Q10. MK-4 is a vitamin K2 isoform required for endothelial cell development. Mediates the conversion of phylloquinone (PK) into MK-4, probably by cleaving the side chain of phylloquinone (PK) to release 2-methyl-1,4-naphthoquinone (menadione; K3) and then prenylating it with geranylgeranyl pyrophosphate (GGPP) to form MK-4. Also plays a role in cardiovascular development independently of MK-4 biosynthesis, by acting as a coenzyme Q10 biosynthetic enzyme: coenzyme Q10, also named ubiquinone, plays an important antioxidant role in the cardiovascular system. Mediates biosynthesis of coenzyme Q10 in the Golgi membrane, leading to protect cardiovascular tissues from NOS3/eNOS-dependent oxidative stress. This chain is UbiA prenyltransferase domain-containing protein 1 (Ubiad1), found in Rattus norvegicus (Rat).